The chain runs to 238 residues: Probable transcriptional regulatory protein IL0164 (238 aa).

The protein belongs to the TACO1 family.

It is found in the cytoplasm. The sequence is that of Probable transcriptional regulatory protein IL0164 from Idiomarina loihiensis (strain ATCC BAA-735 / DSM 15497 / L2-TR).